Here is a 336-residue protein sequence, read N- to C-terminus: tRNA pseudouridine synthase D (336 aa).

The Nucleophile role is filled by D84. In terms of domain architecture, TRUD spans 164 to 298; sequence GVPNYFGEQR…TPSYRWLVGD (135 aa).

Belongs to the pseudouridine synthase TruD family.

The catalysed reaction is uridine(13) in tRNA = pseudouridine(13) in tRNA. Its function is as follows. Responsible for synthesis of pseudouridine from uracil-13 in transfer RNAs. This is tRNA pseudouridine synthase D from Cellvibrio japonicus (strain Ueda107) (Pseudomonas fluorescens subsp. cellulosa).